Reading from the N-terminus, the 609-residue chain is Dihydroxy-acid dehydratase (609 aa).

Asp-81 lines the Mg(2+) pocket. Cys-122 contacts [2Fe-2S] cluster. Mg(2+)-binding residues include Asp-123 and Lys-124. The residue at position 124 (Lys-124) is an N6-carboxylysine. Cys-195 lines the [2Fe-2S] cluster pocket. Glu-491 contacts Mg(2+). The Proton acceptor role is filled by Ser-517.

The protein belongs to the IlvD/Edd family. Homodimer. It depends on [2Fe-2S] cluster as a cofactor. Mg(2+) is required as a cofactor.

The enzyme catalyses (2R)-2,3-dihydroxy-3-methylbutanoate = 3-methyl-2-oxobutanoate + H2O. It carries out the reaction (2R,3R)-2,3-dihydroxy-3-methylpentanoate = (S)-3-methyl-2-oxopentanoate + H2O. It functions in the pathway amino-acid biosynthesis; L-isoleucine biosynthesis; L-isoleucine from 2-oxobutanoate: step 3/4. Its pathway is amino-acid biosynthesis; L-valine biosynthesis; L-valine from pyruvate: step 3/4. Functions in the biosynthesis of branched-chain amino acids. Catalyzes the dehydration of (2R,3R)-2,3-dihydroxy-3-methylpentanoate (2,3-dihydroxy-3-methylvalerate) into 2-oxo-3-methylpentanoate (2-oxo-3-methylvalerate) and of (2R)-2,3-dihydroxy-3-methylbutanoate (2,3-dihydroxyisovalerate) into 2-oxo-3-methylbutanoate (2-oxoisovalerate), the penultimate precursor to L-isoleucine and L-valine, respectively. The protein is Dihydroxy-acid dehydratase of Acinetobacter baumannii (strain ATCC 17978 / DSM 105126 / CIP 53.77 / LMG 1025 / NCDC KC755 / 5377).